The sequence spans 394 residues: Nuclear hormone receptor family member nhr-18 (394 aa).

The nuclear receptor DNA-binding region spans Ser-8 to Thr-83. 2 NR C4-type zinc fingers span residues Cys-11–Cys-31 and Cys-48–Cys-71. The NR LBD domain maps to Met-134–Thr-394.

Belongs to the nuclear hormone receptor family.

Its subcellular location is the nucleus. In terms of biological role, orphan nuclear receptor. This Caenorhabditis elegans protein is Nuclear hormone receptor family member nhr-18 (nhr-18).